The following is a 601-amino-acid chain: Glutathione-regulated potassium-efflux system protein KefB (601 aa).

The next 13 membrane-spanning stretches (helical) occupy residues S4–A24, I29–F49, E55–L75, I87–M107, A115–M135, V152–G172, H177–G197, F207–G227, L230–L250, G268–Y288, L291–L311, M324–A344, and A356–V376. Residues K400–T519 form the RCK N-terminal domain.

It belongs to the monovalent cation:proton antiporter 2 (CPA2) transporter (TC 2.A.37) family. KefB subfamily. As to quaternary structure, interacts with the regulatory subunit KefG.

It localises to the cell inner membrane. In terms of biological role, pore-forming subunit of a potassium efflux system that confers protection against electrophiles. Catalyzes K(+)/H(+) antiport. The protein is Glutathione-regulated potassium-efflux system protein KefB of Escherichia coli (strain SMS-3-5 / SECEC).